Reading from the N-terminus, the 110-residue chain is Iron-sulfur cluster assembly protein CyaY (110 aa).

Belongs to the frataxin family.

Functionally, involved in iron-sulfur (Fe-S) cluster assembly. May act as a regulator of Fe-S biogenesis. This chain is Iron-sulfur cluster assembly protein CyaY, found in Pseudomonas syringae pv. syringae (strain B728a).